Consider the following 870-residue polypeptide: Alanine--tRNA ligase (870 aa).

Zn(2+)-binding residues include His585, His589, Cys689, and His693.

The protein belongs to the class-II aminoacyl-tRNA synthetase family. The cofactor is Zn(2+).

Its subcellular location is the cytoplasm. It carries out the reaction tRNA(Ala) + L-alanine + ATP = L-alanyl-tRNA(Ala) + AMP + diphosphate. Functionally, catalyzes the attachment of alanine to tRNA(Ala) in a two-step reaction: alanine is first activated by ATP to form Ala-AMP and then transferred to the acceptor end of tRNA(Ala). Also edits incorrectly charged Ser-tRNA(Ala) and Gly-tRNA(Ala) via its editing domain. This is Alanine--tRNA ligase from Picrophilus torridus (strain ATCC 700027 / DSM 9790 / JCM 10055 / NBRC 100828 / KAW 2/3).